We begin with the raw amino-acid sequence, 406 residues long: CinA-like protein (406 aa).

The protein belongs to the CinA family.

This Pseudothermotoga lettingae (strain ATCC BAA-301 / DSM 14385 / NBRC 107922 / TMO) (Thermotoga lettingae) protein is CinA-like protein.